The primary structure comprises 232 residues: Ubiquinone biosynthesis O-methyltransferase (232 aa).

S-adenosyl-L-methionine is bound by residues R36, G55, D76, and M120.

This sequence belongs to the methyltransferase superfamily. UbiG/COQ3 family.

It catalyses the reaction a 3-demethylubiquinol + S-adenosyl-L-methionine = a ubiquinol + S-adenosyl-L-homocysteine + H(+). It carries out the reaction a 3-(all-trans-polyprenyl)benzene-1,2-diol + S-adenosyl-L-methionine = a 2-methoxy-6-(all-trans-polyprenyl)phenol + S-adenosyl-L-homocysteine + H(+). The protein operates within cofactor biosynthesis; ubiquinone biosynthesis. Functionally, O-methyltransferase that catalyzes the 2 O-methylation steps in the ubiquinone biosynthetic pathway. In Burkholderia orbicola (strain MC0-3), this protein is Ubiquinone biosynthesis O-methyltransferase.